The chain runs to 871 residues: Alanine--tRNA ligase (871 aa).

Zn(2+) contacts are provided by histidine 561, histidine 565, cysteine 665, and histidine 669.

This sequence belongs to the class-II aminoacyl-tRNA synthetase family. Zn(2+) is required as a cofactor.

The protein localises to the cytoplasm. The catalysed reaction is tRNA(Ala) + L-alanine + ATP = L-alanyl-tRNA(Ala) + AMP + diphosphate. Functionally, catalyzes the attachment of alanine to tRNA(Ala) in a two-step reaction: alanine is first activated by ATP to form Ala-AMP and then transferred to the acceptor end of tRNA(Ala). Also edits incorrectly charged Ser-tRNA(Ala) and Gly-tRNA(Ala) via its editing domain. The protein is Alanine--tRNA ligase of Dehalococcoides mccartyi (strain ATCC BAA-2100 / JCM 16839 / KCTC 5957 / BAV1).